The primary structure comprises 487 residues: Glycogen synthase (487 aa).

K20 provides a ligand contact to ADP-alpha-D-glucose.

Belongs to the glycosyltransferase 1 family. Bacterial/plant glycogen synthase subfamily.

The enzyme catalyses [(1-&gt;4)-alpha-D-glucosyl](n) + ADP-alpha-D-glucose = [(1-&gt;4)-alpha-D-glucosyl](n+1) + ADP + H(+). The protein operates within glycan biosynthesis; glycogen biosynthesis. In terms of biological role, synthesizes alpha-1,4-glucan chains using ADP-glucose. The chain is Glycogen synthase from Aliivibrio fischeri (strain ATCC 700601 / ES114) (Vibrio fischeri).